We begin with the raw amino-acid sequence, 334 residues long: ELMO domain-containing protein 1 (334 aa).

The ELMO domain maps to 133-314 (QHEEMLLKLW…KFRKRIIKQL (182 aa)).

Acts as a GTPase-activating protein (GAP) toward guanine nucleotide exchange factors like ARL2, ARL3, ARF1 and ARF6, but not for GTPases outside the Arf family. This Homo sapiens (Human) protein is ELMO domain-containing protein 1 (ELMOD1).